The following is a 293-amino-acid chain: Shikimate dehydrogenase (NADP(+)) (293 aa).

Residues 20–22 (SLT) and Thr-72 each bind shikimate. The active-site Proton acceptor is Lys-76. Shikimate-binding residues include Asn-97 and Asp-112. NADP(+) contacts are provided by residues 136–140 (GAGGA) and Ile-230. Tyr-232 contacts shikimate. An NADP(+)-binding site is contributed by Gly-253.

It belongs to the shikimate dehydrogenase family. Homodimer.

The catalysed reaction is shikimate + NADP(+) = 3-dehydroshikimate + NADPH + H(+). Its pathway is metabolic intermediate biosynthesis; chorismate biosynthesis; chorismate from D-erythrose 4-phosphate and phosphoenolpyruvate: step 4/7. In terms of biological role, involved in the biosynthesis of the chorismate, which leads to the biosynthesis of aromatic amino acids. Catalyzes the reversible NADPH linked reduction of 3-dehydroshikimate (DHSA) to yield shikimate (SA). The chain is Shikimate dehydrogenase (NADP(+)) from Arthrobacter sp. (strain FB24).